The chain runs to 258 residues: Imidazole glycerol phosphate synthase subunit HisF (258 aa).

Residues Asp12 and Asp131 contribute to the active site.

It belongs to the HisA/HisF family. In terms of assembly, heterodimer of HisH and HisF.

Its subcellular location is the cytoplasm. It carries out the reaction 5-[(5-phospho-1-deoxy-D-ribulos-1-ylimino)methylamino]-1-(5-phospho-beta-D-ribosyl)imidazole-4-carboxamide + L-glutamine = D-erythro-1-(imidazol-4-yl)glycerol 3-phosphate + 5-amino-1-(5-phospho-beta-D-ribosyl)imidazole-4-carboxamide + L-glutamate + H(+). It participates in amino-acid biosynthesis; L-histidine biosynthesis; L-histidine from 5-phospho-alpha-D-ribose 1-diphosphate: step 5/9. IGPS catalyzes the conversion of PRFAR and glutamine to IGP, AICAR and glutamate. The HisF subunit catalyzes the cyclization activity that produces IGP and AICAR from PRFAR using the ammonia provided by the HisH subunit. In Paenarthrobacter aurescens (strain TC1), this protein is Imidazole glycerol phosphate synthase subunit HisF.